Consider the following 453-residue polypeptide: tRNA modification GTPase MnmE (453 aa).

Arg22, Glu79, and Lys119 together coordinate (6S)-5-formyl-5,6,7,8-tetrahydrofolate. The TrmE-type G domain maps to 215 to 376 (GMKVVIAGRP…LKLHLKSLMG (162 aa)). Asn225 serves as a coordination point for K(+). Residues 225–230 (NAGKSS), 244–250 (TEIAGTT), 269–272 (DTAG), and 334–337 (NKAD) contribute to the GTP site. A Mg(2+)-binding site is contributed by Ser229. Positions 244, 246, and 249 each coordinate K(+). Thr250 lines the Mg(2+) pocket. Position 453 (Lys453) interacts with (6S)-5-formyl-5,6,7,8-tetrahydrofolate.

It belongs to the TRAFAC class TrmE-Era-EngA-EngB-Septin-like GTPase superfamily. TrmE GTPase family. Homodimer. Heterotetramer of two MnmE and two MnmG subunits. The cofactor is K(+).

It localises to the cytoplasm. In terms of biological role, exhibits a very high intrinsic GTPase hydrolysis rate. Involved in the addition of a carboxymethylaminomethyl (cmnm) group at the wobble position (U34) of certain tRNAs, forming tRNA-cmnm(5)s(2)U34. This chain is tRNA modification GTPase MnmE, found in Shewanella putrefaciens (strain CN-32 / ATCC BAA-453).